Consider the following 165-residue polypeptide: MNKRNKVKHLNRNKGHRDALINNMITSLFKYERIESTQAKLKVIRSHAEKLITRAKKNLVADLKPEVQLHNKREVMKRIKDREVVVKLFEDIAKRFESKNGGYTRVLKLVNRASDNSEVGILELTSRKERAILLKERQEKREAQEKAREEKRTARKSDSVPARKK.

Residues 138 to 158 (QEKREAQEKAREEKRTARKSD) show a composition bias toward basic and acidic residues. Positions 138–165 (QEKREAQEKAREEKRTARKSDSVPARKK) are disordered.

This sequence belongs to the bacterial ribosomal protein bL17 family. Part of the 50S ribosomal subunit. Contacts protein L32.

This Leptospira borgpetersenii serovar Hardjo-bovis (strain JB197) protein is Large ribosomal subunit protein bL17.